Consider the following 638-residue polypeptide: NBPF family member NBPF4 (638 aa).

Coiled coils occupy residues 10-43 (SERA…EKFL) and 69-115 (DSVL…KLRE). The disordered stretch occupies residues 157 to 285 (HLVHKLSPEN…VPPRHHDKSN (129 aa)). A compositionally biased stretch (acidic residues) spans 165-179 (ENDEDEDEDEDDKDE). Positions 174-261 (EDDKDEEVEK…EEEEALNIPP (88 aa)) constitute an Olduvai 1 domain. Residues 192–202 (EVQKTEEKEVP) show a composition bias toward basic and acidic residues. Positions 214 to 226 (SNSHNPSNSNQPH) are enriched in low complexity. Basic and acidic residues-rich tracts occupy residues 232-251 (TFKE…HPHD) and 264-273 (QNDHEEEEGK). Olduvai domains lie at 326–399 (EKQS…ALVD) and 400–503 (KIKK…SQAQ). The segment at 562–584 (GMKNPPQLEDDALEGSASNTQGR) is disordered.

Belongs to the NBPF family. In terms of tissue distribution, expressed in testis.

It is found in the cytoplasm. This chain is NBPF family member NBPF4, found in Homo sapiens (Human).